The chain runs to 270 residues: Small ribosomal subunit protein uS2 (270 aa).

A compositionally biased stretch (acidic residues) spans 207–225 (EEPENTEEAAEEAATEEVV). The tract at residues 207-270 (EEPENTEEAA…SESAPAPVAA (64 aa)) is disordered. The segment covering 226 to 258 (ETAAAEAAAATNADNWDVAPDAGAGAADWAATD) has biased composition (low complexity).

It belongs to the universal ribosomal protein uS2 family. Component of the small ribosomal subunit. Mature ribosomes consist of a small (40S) and a large (60S) subunit. The 40S subunit contains about 33 different proteins and 1 molecule of RNA (18S). The 60S subunit contains about 49 different proteins and 3 molecules of RNA (25S, 5.8S and 5S). Interacts with RPS21.

It is found in the cytoplasm. In terms of biological role, required for the assembly and/or stability of the 40S ribosomal subunit. Required for the processing of the 20S rRNA-precursor to mature 18S rRNA in a late step of the maturation of 40S ribosomal subunits. The protein is Small ribosomal subunit protein uS2 of Yarrowia lipolytica (strain CLIB 122 / E 150) (Yeast).